The chain runs to 337 residues: tRNA N6-adenosine threonylcarbamoyltransferase (337 aa).

2 residues coordinate Fe cation: His-111 and His-115. Residues 134–138 (LVSGG), Asp-167, Gly-180, and Asn-272 each bind substrate. Asp-300 serves as a coordination point for Fe cation.

This sequence belongs to the KAE1 / TsaD family. Fe(2+) serves as cofactor.

The protein resides in the cytoplasm. The catalysed reaction is L-threonylcarbamoyladenylate + adenosine(37) in tRNA = N(6)-L-threonylcarbamoyladenosine(37) in tRNA + AMP + H(+). Functionally, required for the formation of a threonylcarbamoyl group on adenosine at position 37 (t(6)A37) in tRNAs that read codons beginning with adenine. Is involved in the transfer of the threonylcarbamoyl moiety of threonylcarbamoyl-AMP (TC-AMP) to the N6 group of A37, together with TsaE and TsaB. TsaD likely plays a direct catalytic role in this reaction. The protein is tRNA N6-adenosine threonylcarbamoyltransferase of Shewanella woodyi (strain ATCC 51908 / MS32).